The sequence spans 233 residues: LexA repressor (233 aa).

Residues 26 to 46 (FDEMKDALDLRSKSGIHRLIT) constitute a DNA-binding region (H-T-H motif). Active-site for autocatalytic cleavage activity residues include S154 and K192.

Belongs to the peptidase S24 family. Homodimer.

It catalyses the reaction Hydrolysis of Ala-|-Gly bond in repressor LexA.. Its function is as follows. Represses a number of genes involved in the response to DNA damage (SOS response), including recA and lexA. In the presence of single-stranded DNA, RecA interacts with LexA causing an autocatalytic cleavage which disrupts the DNA-binding part of LexA, leading to derepression of the SOS regulon and eventually DNA repair. In Nitrobacter winogradskyi (strain ATCC 25391 / DSM 10237 / CIP 104748 / NCIMB 11846 / Nb-255), this protein is LexA repressor.